A 340-amino-acid polypeptide reads, in one-letter code: MTKITVIGAGSWGTALAMVLADNGHDVRIWGNRPELMNEINTKRENSRYLPGITLPSTIVAYSSLEEALVDVNTVLLVVPTKAYRDVLQEMKEIVTEPITWIHASKGIEPGTSKRISEVIEEEIPESLIKDVVVLSGPSHAEEVGLHQATTVTSAAKRMEAAEGVQDLFMNSYFRVYTNPDIVGVELGGALKNIIALAAGISDGLGLGDNAKAALMTRGLTEIARLGRKMGGNPLTFAGLTGMGDLIVTCTSVHSRNWRAGNMLGKGHSLEEVLESMGMVVEGVRTTKAAHELAEKMEVEMPITAALYDVLFNGNNVKDAVGSLMGRVRKHEVEAIPDLL.

Residues serine 11, tryptophan 12, arginine 33, and lysine 106 each coordinate NADPH. Lysine 106, glycine 137, and serine 139 together coordinate sn-glycerol 3-phosphate. Residue alanine 141 coordinates NADPH. Sn-glycerol 3-phosphate contacts are provided by lysine 192, aspartate 245, serine 255, arginine 256, and asparagine 257. Lysine 192 (proton acceptor) is an active-site residue. Arginine 256 contacts NADPH. Valine 280 and glutamate 282 together coordinate NADPH.

It belongs to the NAD-dependent glycerol-3-phosphate dehydrogenase family.

It is found in the cytoplasm. The catalysed reaction is sn-glycerol 3-phosphate + NAD(+) = dihydroxyacetone phosphate + NADH + H(+). It carries out the reaction sn-glycerol 3-phosphate + NADP(+) = dihydroxyacetone phosphate + NADPH + H(+). It functions in the pathway membrane lipid metabolism; glycerophospholipid metabolism. In terms of biological role, catalyzes the reduction of the glycolytic intermediate dihydroxyacetone phosphate (DHAP) to sn-glycerol 3-phosphate (G3P), the key precursor for phospholipid synthesis. The polypeptide is Glycerol-3-phosphate dehydrogenase [NAD(P)+] (Bacillus mycoides (strain KBAB4) (Bacillus weihenstephanensis)).